The primary structure comprises 338 residues: UPF0284 protein TV0153 (338 aa).

It belongs to the UPF0284 family.

In Thermoplasma volcanium (strain ATCC 51530 / DSM 4299 / JCM 9571 / NBRC 15438 / GSS1), this protein is UPF0284 protein TV0153.